The sequence spans 564 residues: MSYPADDYESEAAYDPYAYPGDYDMHTGDPKQDLAYERQYEQQTYQVIPEVIKNFIQYFHKTVSDLIDQKVYELQASRVSSDVIDQKVYEIQDIYENSWTKLTERFFKNTPWPEAEAIAPQVGNDAVFLILYKELYYRHIYAKVSGGPSLEQRFESYYNYCNLFNYILNADGPAPLELPNQWLWDIIDEFIYQFQSFSQYRCKTAKKSEGEMDFLRSNPKVWNVHSVLNVLHSLVDKSNINRQLEVYTSGGDPESVAGEYGRHSLYKMLGYFSLVGLLRLHSLLGDYYQAIKVLENIELNKKSMYSRVPECQVTTYYYVGFAYLMMRRYQDAIRVFANILLYIQRTKSMFQRTTYKYEMINKQNEQMHALLAIALTMYPMRIDESIHLQLREKYGDKMLRMQKGDPQVYEELFSYACPKFLSPVVPNYDNVHPNYHKEPFLQQLKVFSDEVQQQAQLSTIRSFLKLYTTMPVAKLAGFLDLTEQEFRIQLLVFKHKMKNLVWTSGISALDGEFQSASEVDFYIDKDMIHIADTKVARRYGDFFIRQIHKFEELNRTLKKMGQRP.

An N-acetylserine modification is found at serine 2. The PCI domain occupies 331–537 (DAIRVFANIL…IHIADTKVAR (207 aa)). Residues lysine 465 and lysine 549 each carry the N6-acetyllysine modification.

It belongs to the eIF-3 subunit L family. As to quaternary structure, component of the eukaryotic translation initiation factor 3 (eIF-3) complex, which is composed of 13 subunits: EIF3A, EIF3B, EIF3C, EIF3D, EIF3E, EIF3F, EIF3G, EIF3H, EIF3I, EIF3J, EIF3K, EIF3L and EIF3M. The eIF-3 complex appears to include 3 stable modules: module A is composed of EIF3A, EIF3B, EIF3G and EIF3I; module B is composed of EIF3F, EIF3H, and EIF3M; and module C is composed of EIF3C, EIF3D, EIF3E, EIF3K and EIF3L. EIF3C of module C binds EIF3B of module A and EIF3H of module B, thereby linking the three modules. EIF3J is a labile subunit that binds to the eIF-3 complex via EIF3B. The eIF-3 complex may interact with RPS6KB1 under conditions of nutrient depletion. Mitogenic stimulation may lead to binding and activation of a complex composed of MTOR and RPTOR, leading to phosphorylation and release of RPS6KB1 and binding of EIF4B to eIF-3. Interacts with RRN3.

It is found in the cytoplasm. In terms of biological role, component of the eukaryotic translation initiation factor 3 (eIF-3) complex, which is required for several steps in the initiation of protein synthesis. The eIF-3 complex associates with the 40S ribosome and facilitates the recruitment of eIF-1, eIF-1A, eIF-2:GTP:methionyl-tRNAi and eIF-5 to form the 43S pre-initiation complex (43S PIC). The eIF-3 complex stimulates mRNA recruitment to the 43S PIC and scanning of the mRNA for AUG recognition. The eIF-3 complex is also required for disassembly and recycling of post-termination ribosomal complexes and subsequently prevents premature joining of the 40S and 60S ribosomal subunits prior to initiation. The eIF-3 complex specifically targets and initiates translation of a subset of mRNAs involved in cell proliferation, including cell cycling, differentiation and apoptosis, and uses different modes of RNA stem-loop binding to exert either translational activation or repression. This Mus musculus (Mouse) protein is Eukaryotic translation initiation factor 3 subunit L (Eif3l).